Consider the following 465-residue polypeptide: Sensor histidine kinase ZraS (465 aa).

The Cytoplasmic segment spans residues 1 to 14 (MSFIRLHKDAAATW). Residues 15–35 (LSRLLPAAIFILVGLFSIMVI) form a helical membrane-spanning segment. The Periplasmic portion of the chain corresponds to 36–202 (RDYGRESAAA…AATQAREWRN (167 aa)). The helical transmembrane segment at 203-223 (TLIVLSALAAVLLATLLAFFW) threads the bilayer. Residues 224–465 (HQRYQRSHRE…WLPVIARQQD (242 aa)) lie on the Cytoplasmic side of the membrane. One can recognise a Histidine kinase domain in the interval 253–461 (GVAHEIRNPL…VFTIWLPVIA (209 aa)). Histidine 256 bears the Phosphohistidine; by autocatalysis mark.

Post-translationally, autophosphorylated.

Its subcellular location is the cell inner membrane. The enzyme catalyses ATP + protein L-histidine = ADP + protein N-phospho-L-histidine.. With respect to regulation, activity of the ZraS/ZraR two-component system is repressed by the zinc-bound form of ZraP, which probably interacts with the periplasmic region of ZraS. Functionally, part of the Zra signaling pathway, an envelope stress response (ESR) system composed of the periplasmic accessory protein ZraP, the histidine kinase ZraS and the transcriptional regulator ZraR. The ZraPSR system contributes to antibiotic resistance and is important for membrane integrity in the presence of membrane-targeting biocides. ZraS is a member of the two-component regulatory system ZraS/ZraR. Functions as a membrane-associated sensor kinase that phosphorylates ZraR in response to high concentrations of Zn(2+) or Pb(2+) in the medium. This Salmonella typhimurium (strain LT2 / SGSC1412 / ATCC 700720) protein is Sensor histidine kinase ZraS.